Here is an 86-residue protein sequence, read N- to C-terminus: Small ribosomal subunit protein uS15 (86 aa).

It belongs to the universal ribosomal protein uS15 family. As to quaternary structure, part of the 30S ribosomal subunit. Forms a bridge to the 50S subunit in the 70S ribosome, contacting the 23S rRNA.

Functionally, one of the primary rRNA binding proteins, it binds directly to 16S rRNA where it helps nucleate assembly of the platform of the 30S subunit by binding and bridging several RNA helices of the 16S rRNA. Its function is as follows. Forms an intersubunit bridge (bridge B4) with the 23S rRNA of the 50S subunit in the ribosome. This is Small ribosomal subunit protein uS15 from Vesicomyosocius okutanii subsp. Calyptogena okutanii (strain HA).